Consider the following 430-residue polypeptide: Adenylosuccinate synthetase (430 aa).

GTP-binding positions include 12 to 18 and 40 to 42; these read GDEGKGK and GHT. The Proton acceptor role is filled by Asp13. Positions 13 and 40 each coordinate Mg(2+). IMP is bound by residues 13-16, 38-41, Thr130, Arg144, Gln224, Thr239, and Arg303; these read DEGK and NAGH. Residue His41 is the Proton donor of the active site. 299–305 is a binding site for substrate; that stretch reads VVTGRKR. GTP-binding positions include Arg305, 331–333, and 413–415; these read KLD and STS.

It belongs to the adenylosuccinate synthetase family. Homodimer. Mg(2+) is required as a cofactor.

The protein localises to the cytoplasm. It catalyses the reaction IMP + L-aspartate + GTP = N(6)-(1,2-dicarboxyethyl)-AMP + GDP + phosphate + 2 H(+). It participates in purine metabolism; AMP biosynthesis via de novo pathway; AMP from IMP: step 1/2. Functionally, plays an important role in the de novo pathway of purine nucleotide biosynthesis. Catalyzes the first committed step in the biosynthesis of AMP from IMP. The polypeptide is Adenylosuccinate synthetase (Methylobacterium sp. (strain 4-46)).